The primary structure comprises 231 residues: Ribonuclease 3 (231 aa).

In terms of domain architecture, RNase III spans L12–G139. E52 provides a ligand contact to Mg(2+). D56 is a catalytic residue. Mg(2+) contacts are provided by D125 and E128. E128 is an active-site residue. Residues D165 to T231 enclose the DRBM domain.

The protein belongs to the ribonuclease III family. Homodimer. Mg(2+) serves as cofactor.

It localises to the cytoplasm. The catalysed reaction is Endonucleolytic cleavage to 5'-phosphomonoester.. Its function is as follows. Digests double-stranded RNA. Involved in the processing of primary rRNA transcript to yield the immediate precursors to the large and small rRNAs (23S and 16S). Processes some mRNAs, and tRNAs when they are encoded in the rRNA operon. Processes pre-crRNA and tracrRNA of type II CRISPR loci if present in the organism. This chain is Ribonuclease 3, found in Mycoplasmopsis synoviae (strain 53) (Mycoplasma synoviae).